The chain runs to 341 residues: Uroporphyrinogen decarboxylase (341 aa).

Substrate-binding positions include 23-27 (RQAGR), Asp-73, Tyr-148, Ser-203, and His-318.

This sequence belongs to the uroporphyrinogen decarboxylase family. In terms of assembly, homodimer.

The protein resides in the cytoplasm. It carries out the reaction uroporphyrinogen III + 4 H(+) = coproporphyrinogen III + 4 CO2. It functions in the pathway porphyrin-containing compound metabolism; protoporphyrin-IX biosynthesis; coproporphyrinogen-III from 5-aminolevulinate: step 4/4. Its function is as follows. Catalyzes the decarboxylation of four acetate groups of uroporphyrinogen-III to yield coproporphyrinogen-III. This is Uroporphyrinogen decarboxylase from Brucella anthropi (strain ATCC 49188 / DSM 6882 / CCUG 24695 / JCM 21032 / LMG 3331 / NBRC 15819 / NCTC 12168 / Alc 37) (Ochrobactrum anthropi).